The sequence spans 252 residues: Centromere protein V (252 aa).

The segment at 1-80 (MRRTRSAVAT…EEPPPAVTPA (80 aa)) is disordered. The residue at position 18 (Ser-18) is a Phosphoserine. Position 39 is an omega-N-methylarginine (Arg-39). The segment covering 54-64 (SAKPRPKPPPR) has biased composition (pro residues). A Phosphothreonine modification is found at Thr-78. The 113-residue stretch at 125 to 237 (HTGGCHCGAV…TEEFNGSDWE (113 aa)) folds into the CENP-V/GFA domain. Residues Cys-129, Cys-131, Cys-149, Cys-151, Cys-154, Cys-193, and Cys-196 each contribute to the Zn(2+) site. The residue at position 234 (Ser-234) is a Phosphoserine.

The protein belongs to the Gfa family. It depends on Zn(2+) as a cofactor.

Its subcellular location is the chromosome. The protein resides in the centromere. The protein localises to the kinetochore. It is found in the nucleus. It localises to the cytoplasm. Its subcellular location is the cytoskeleton. The protein resides in the spindle. Functionally, required for distribution of pericentromeric heterochromatin in interphase nuclei and for centromere formation and organization, chromosome alignment and cytokinesis. The sequence is that of Centromere protein V (Cenpv) from Mus musculus (Mouse).